The chain runs to 340 residues: 3-isopropylmalate dehydrogenase (340 aa).

Substrate is bound by residues Arg88, Arg98, Arg122, and Asp212. Mg(2+) contacts are provided by Asp212, Asp236, and Asp240. An NAD(+)-binding site is contributed by 272 to 284 (GSAPDIAGQGIAD).

It belongs to the isocitrate and isopropylmalate dehydrogenases family. LeuB type 2 subfamily. As to quaternary structure, homodimer. The cofactor is Mg(2+). It depends on Mn(2+) as a cofactor.

The protein localises to the cytoplasm. It carries out the reaction (2R,3S)-3-isopropylmalate + NAD(+) = 4-methyl-2-oxopentanoate + CO2 + NADH. It participates in amino-acid biosynthesis; L-leucine biosynthesis; L-leucine from 3-methyl-2-oxobutanoate: step 3/4. Its function is as follows. Catalyzes the oxidation of 3-carboxy-2-hydroxy-4-methylpentanoate (3-isopropylmalate) to 3-carboxy-4-methyl-2-oxopentanoate. The product decarboxylates to 4-methyl-2 oxopentanoate. This Corynebacterium glutamicum (strain R) protein is 3-isopropylmalate dehydrogenase.